A 569-amino-acid chain; its full sequence is Urease subunit alpha (569 aa).

A Urease domain is found at 131–569; it reads GGFDSHIHFI…LPMAQRYFLF (439 aa). Ni(2+) is bound by residues His136, His138, and Lys219. An N6-carboxylysine modification is found at Lys219. Residue His221 participates in substrate binding. Ni(2+) contacts are provided by His248 and His274. The Proton donor role is filled by His322. Asp362 is a Ni(2+) binding site.

It belongs to the metallo-dependent hydrolases superfamily. Urease alpha subunit family. In terms of assembly, heterotrimer of UreA (gamma), UreB (beta) and UreC (alpha) subunits. Three heterotrimers associate to form the active enzyme. The cofactor is Ni cation. Carboxylation allows a single lysine to coordinate two nickel ions.

Its subcellular location is the cytoplasm. It carries out the reaction urea + 2 H2O + H(+) = hydrogencarbonate + 2 NH4(+). The protein operates within nitrogen metabolism; urea degradation; CO(2) and NH(3) from urea (urease route): step 1/1. This is Urease subunit alpha from Roseobacter denitrificans (strain ATCC 33942 / OCh 114) (Erythrobacter sp. (strain OCh 114)).